Reading from the N-terminus, the 159-residue chain is uncharacterized protein (159 aa).

The N-acetyltransferase domain occupies 1–139 (MNIIPTCQVP…TARKMKPEIP (139 aa)).

This is an uncharacterized protein from Bacillus subtilis (strain 168).